The sequence spans 355 residues: 3-dehydroquinate synthase (355 aa).

NAD(+) is bound by residues 71–76 (EGEERK), 105–109 (GVVGD), 129–130 (TS), Lys-142, and Lys-151. Glu-184, His-246, and His-263 together coordinate Zn(2+).

Belongs to the sugar phosphate cyclases superfamily. Dehydroquinate synthase family. Co(2+) is required as a cofactor. Requires Zn(2+) as cofactor. The cofactor is NAD(+).

The protein localises to the cytoplasm. It carries out the reaction 7-phospho-2-dehydro-3-deoxy-D-arabino-heptonate = 3-dehydroquinate + phosphate. The protein operates within metabolic intermediate biosynthesis; chorismate biosynthesis; chorismate from D-erythrose 4-phosphate and phosphoenolpyruvate: step 2/7. In terms of biological role, catalyzes the conversion of 3-deoxy-D-arabino-heptulosonate 7-phosphate (DAHP) to dehydroquinate (DHQ). In Streptococcus pneumoniae (strain ATCC 700669 / Spain 23F-1), this protein is 3-dehydroquinate synthase.